The chain runs to 357 residues: 39 kDa FK506-binding nuclear protein (357 aa).

Phosphoserine is present on serine 92. Residues 113–251 are disordered; the sequence is KNSKKSEDDE…ASKDPRTITG (139 aa). The segment covering 120–182 has biased composition (acidic residues); the sequence is DDEDENESGE…QDSDDSEAEE (63 aa). 2 positions are modified to phosphoserine: serine 193 and serine 197. Residues 222–237 show a composition bias toward basic and acidic residues; it reads EKPEAKKEQPKAKEPA. Residues 269–357 enclose the PPIase FKBP-type domain; that stretch reads GKRVSVYYIG…VFEVELKAVH (89 aa).

It belongs to the FKBP-type PPIase family. In terms of tissue distribution, ubiquitously expressed, highest levels in ovary.

Its subcellular location is the nucleus. The enzyme catalyses [protein]-peptidylproline (omega=180) = [protein]-peptidylproline (omega=0). PPIases accelerate the folding of proteins. May function in a signal transduction cascade during early development. This chain is 39 kDa FK506-binding nuclear protein, found in Drosophila melanogaster (Fruit fly).